The sequence spans 284 residues: Bifunctional protein FolD 2 (284 aa).

NADP(+)-binding positions include 166 to 168 (GAS) and isoleucine 232.

It belongs to the tetrahydrofolate dehydrogenase/cyclohydrolase family. Homodimer.

The enzyme catalyses (6R)-5,10-methylene-5,6,7,8-tetrahydrofolate + NADP(+) = (6R)-5,10-methenyltetrahydrofolate + NADPH. It catalyses the reaction (6R)-5,10-methenyltetrahydrofolate + H2O = (6R)-10-formyltetrahydrofolate + H(+). The protein operates within one-carbon metabolism; tetrahydrofolate interconversion. Its function is as follows. Catalyzes the oxidation of 5,10-methylenetetrahydrofolate to 5,10-methenyltetrahydrofolate and then the hydrolysis of 5,10-methenyltetrahydrofolate to 10-formyltetrahydrofolate. The protein is Bifunctional protein FolD 2 of Colwellia psychrerythraea (strain 34H / ATCC BAA-681) (Vibrio psychroerythus).